Here is a 338-residue protein sequence, read N- to C-terminus: Aspartate carbamoyltransferase catalytic subunit (338 aa).

Residues arginine 57 and threonine 58 each contribute to the carbamoyl phosphate site. Residue lysine 86 participates in L-aspartate binding. Arginine 107, histidine 135, and glutamine 138 together coordinate carbamoyl phosphate. 2 residues coordinate L-aspartate: arginine 172 and arginine 234. Residues leucine 274 and proline 275 each coordinate carbamoyl phosphate.

Belongs to the aspartate/ornithine carbamoyltransferase superfamily. ATCase family. Heterododecamer (2C3:3R2) of six catalytic PyrB chains organized as two trimers (C3), and six regulatory PyrI chains organized as three dimers (R2).

The enzyme catalyses carbamoyl phosphate + L-aspartate = N-carbamoyl-L-aspartate + phosphate + H(+). The protein operates within pyrimidine metabolism; UMP biosynthesis via de novo pathway; (S)-dihydroorotate from bicarbonate: step 2/3. Functionally, catalyzes the condensation of carbamoyl phosphate and aspartate to form carbamoyl aspartate and inorganic phosphate, the committed step in the de novo pyrimidine nucleotide biosynthesis pathway. The protein is Aspartate carbamoyltransferase catalytic subunit of Cellvibrio japonicus (strain Ueda107) (Pseudomonas fluorescens subsp. cellulosa).